A 187-amino-acid chain; its full sequence is Small ribosomal subunit protein uS7 (187 aa).

It belongs to the universal ribosomal protein uS7 family. As to quaternary structure, part of the 30S ribosomal subunit.

Functionally, one of the primary rRNA binding proteins, it binds directly to 16S rRNA where it nucleates assembly of the head domain of the 30S subunit. Is located at the subunit interface close to the decoding center. This chain is Small ribosomal subunit protein uS7, found in Methanosphaera stadtmanae (strain ATCC 43021 / DSM 3091 / JCM 11832 / MCB-3).